The following is a 446-amino-acid chain: Rhamnogalacturonase A (446 aa).

The first 18 residues, 1-18, serve as a signal peptide directing secretion; it reads MPALPILALALAPLLVNG. A disulfide bridge links C39 with C65. N-linked (GlcNAc...) asparagine glycans are attached at residues N50, N115, and N124. The active-site Proton donor is the D216. Cysteines 218 and 235 form a disulfide. 3 N-linked (GlcNAc...) asparagine glycosylation sites follow: N236, N281, and N318. 2 cysteine pairs are disulfide-bonded: C341–C347 and C369–C378.

It belongs to the glycosyl hydrolase 28 family.

The protein localises to the secreted. It carries out the reaction Endohydrolysis of alpha-D-GalA-(1-&gt;2)-alpha-L-Rha glycosidic bond in the rhamnogalacturonan I backbone with initial inversion of anomeric configuration releasing oligosaccharides with beta-D-GalA at the reducing end.. Its function is as follows. Pectinolytic enzymes consist of four classes of enzymes: pectine lyase, polygalacturonase, pectin methylesterase and rhamnogalacturonase. Hydrolyzes alpha-D-galacturonopyranosyl-(1,2)-alpha-L-rhamnopyranosyl linkages in the backbone of the hairy regions of pectins. This is Rhamnogalacturonase A (rhgA) from Aspergillus niger.